We begin with the raw amino-acid sequence, 320 residues long: Cytochrome f (320 aa).

Positions 1–35 (MQTKNTFSWIKKEIIRSISVSLMIYIIARTSISNA) are cleaved as a signal peptide. Tyr36, Cys56, Cys59, and His60 together coordinate heme. The chain crosses the membrane as a helical span at residues 286 to 306 (VQGLLFFLASVILAQIFLVLK).

This sequence belongs to the cytochrome f family. As to quaternary structure, the 4 large subunits of the cytochrome b6-f complex are cytochrome b6, subunit IV (17 kDa polypeptide, petD), cytochrome f and the Rieske protein, while the 4 small subunits are PetG, PetL, PetM and PetN. The complex functions as a dimer. Heme is required as a cofactor.

It is found in the plastid. The protein resides in the chloroplast thylakoid membrane. Component of the cytochrome b6-f complex, which mediates electron transfer between photosystem II (PSII) and photosystem I (PSI), cyclic electron flow around PSI, and state transitions. This Eucalyptus globulus subsp. globulus (Tasmanian blue gum) protein is Cytochrome f.